Reading from the N-terminus, the 139-residue chain is Trafficking protein particle complex subunit 2-like protein (139 aa).

This sequence belongs to the TRAPP small subunits family. Sedlin subfamily.

Its subcellular location is the cytoplasm. The protein resides in the perinuclear region. It localises to the endoplasmic reticulum. It is found in the golgi apparatus. Functionally, may play a role in vesicular transport from endoplasmic reticulum to Golgi. The sequence is that of Trafficking protein particle complex subunit 2-like protein (TRAPPC2L) from Taeniopygia guttata (Zebra finch).